The sequence spans 166 residues: MIFKGKAHKYYDNIDTDVIIPARYLNTSDPNELAKHCLEDLDKEFVNKVQKGDILVAGKNFGCGSSREHAPIAIKACGVSCVIAKSFARIFYRNAINIGLPIVECEEAVDGIEAGDEVEVDLVNGIIKNLTKGKEFKAKPFPEFMQNIMKAGGLIEFVKGELKKDA.

This sequence belongs to the LeuD family. LeuD type 2 subfamily. In terms of assembly, heterodimer of LeuC and LeuD.

It carries out the reaction (2R,3S)-3-isopropylmalate = (2S)-2-isopropylmalate. It functions in the pathway amino-acid biosynthesis; L-leucine biosynthesis; L-leucine from 3-methyl-2-oxobutanoate: step 2/4. In terms of biological role, catalyzes the isomerization between 2-isopropylmalate and 3-isopropylmalate, via the formation of 2-isopropylmaleate. This Caldicellulosiruptor bescii (strain ATCC BAA-1888 / DSM 6725 / KCTC 15123 / Z-1320) (Anaerocellum thermophilum) protein is 3-isopropylmalate dehydratase small subunit.